We begin with the raw amino-acid sequence, 330 residues long: DNA-directed RNA polymerase subunit alpha (330 aa).

The tract at residues 1–229 is alpha N-terminal domain (alpha-NTD); the sequence is MKNLKFIKPF…DHFNVLVELS (229 aa). The alpha C-terminal domain (alpha-CTD) stretch occupies residues 245–330; the sequence is AHNYVLDLEI…HSVEEDKDKH (86 aa).

The protein belongs to the RNA polymerase alpha chain family. In terms of assembly, homodimer. The RNAP catalytic core consists of 2 alpha, 1 beta, 1 beta' and 1 omega subunit. When a sigma factor is associated with the core the holoenzyme is formed, which can initiate transcription.

The catalysed reaction is RNA(n) + a ribonucleoside 5'-triphosphate = RNA(n+1) + diphosphate. DNA-dependent RNA polymerase catalyzes the transcription of DNA into RNA using the four ribonucleoside triphosphates as substrates. The chain is DNA-directed RNA polymerase subunit alpha from Aster yellows witches'-broom phytoplasma (strain AYWB).